The following is a 34-amino-acid chain: Photosystem I reaction center subunit XII (34 aa).

Residues 10 to 32 (IFIALVVAAHAGVLAVRLCVSLY) form a helical membrane-spanning segment.

It belongs to the PsaM family.

It is found in the cellular thylakoid membrane. The chain is Photosystem I reaction center subunit XII from Synechococcus sp. (strain WH7803).